The chain runs to 66 residues: Period circadian protein (66 aa).

A disordered region spans residues 1–66 (EGSGGSGSSG…VTLTESLLNK (66 aa)). A compositionally biased stretch (low complexity) spans 9–31 (SGNFTTGSNIHMSSVTNTSNAGT). 4 consecutive repeat copies span residues 30–31 (GT), 32–33 (GT), 35–36 (GT), and 37–38 (GN). The segment at 30 to 53 (GTGTSGTGNSGGGSGGGTGPGSGA) is 4 X 2 AA tandem repeats of G-[TN]. Residues 32–51 (GTSGTGNSGGGSGGGTGPGS) are compositionally biased toward gly residues.

Forms a heterodimer with timeless (TIM); the complex then translocates into the nucleus. Post-translationally, phosphorylated with a circadian rhythmicity, probably by the double-time protein (dbt). Phosphorylation could be implicated in the stability of per monomer and in the formation of heterodimer per-tim.

The protein localises to the nucleus. The protein resides in the cytoplasm. It localises to the perinuclear region. Its function is as follows. Essential for biological clock functions. Determines the period length of circadian and ultradian rhythms; an increase in PER dosage leads to shortened circadian rhythms and a decrease leads to lengthened circadian rhythms. Essential for the circadian rhythmicity of locomotor activity, eclosion behavior, and for the rhythmic component of the male courtship song that originates in the thoracic nervous system. The biological cycle depends on the rhythmic formation and nuclear localization of the TIM-PER complex. Light induces the degradation of TIM, which promotes elimination of PER. Nuclear activity of the heterodimer coordinatively regulates PER and TIM transcription through a negative feedback loop. Behaves as a negative element in circadian transcriptional loop. Does not appear to bind DNA, suggesting indirect transcriptional inhibition. This Drosophila saltans (Fruit fly) protein is Period circadian protein (per).